We begin with the raw amino-acid sequence, 473 residues long: Response regulator protein FleR (473 aa).

The Response regulatory domain occupies 4–118 (KVLLVEDDRA…ALLDLVARHA (115 aa)). D53 carries the 4-aspartylphosphate modification. Residues 130-359 (PVALEPASRQ…LDNAIQRALI (230 aa)) enclose the Sigma-54 factor interaction domain. Residues 158 to 165 (GESGTGKE) and 221 to 230 (ADGGTILLDE) contribute to the ATP site.

In terms of biological role, member of the two-component regulatory system FleS/FleR that regulates the expression of multiple genes involved in flagellar synthesis, adhesion, swarming, motility and antibiotic resistance. May function as a transcriptional activator by direct binding to a cis-acting sequence upstream of the target genes. In Pseudomonas aeruginosa (strain ATCC 15692 / DSM 22644 / CIP 104116 / JCM 14847 / LMG 12228 / 1C / PRS 101 / PAO1), this protein is Response regulator protein FleR.